The sequence spans 366 residues: MATVGGAFKDSLTQAQKDELHQIALKIVQDGKGILAADESTGTIGKRLDAINLENNETNRQKYRQLLFTTPNLNQHISGVILYEETFHQSTDKGEKFTDLLIKQGIVPGIKLDLGVVPLAGTIGEGTTQGLDKLAERAAAFKKGGCGFAKWRCVLNIGTHTPSHLGMLENANVLARYASICQANGLVPIVEPEVLCDGEHDLARAQKVTEQVLAFVYKALADHHVYLEGTLLKPNMVTPGQSSASKASHEAIGLATVTALRRGVPAAVPGITFLSGGQSELDATANLNAINSVQLGKPWKLTFSYGRALQASVLKAWGGKDENIAAAQKTLLHRSKANGDASLGKYAGEDAAGAAAESLFVAKHSY.

The substrate site is built by Arg-60 and Lys-150. Glu-191 (proton acceptor) is an active-site residue. The active-site Schiff-base intermediate with dihydroxyacetone-P is the Lys-233.

It belongs to the class I fructose-bisphosphate aldolase family.

The enzyme catalyses beta-D-fructose 1,6-bisphosphate = D-glyceraldehyde 3-phosphate + dihydroxyacetone phosphate. It functions in the pathway carbohydrate degradation; glycolysis; D-glyceraldehyde 3-phosphate and glycerone phosphate from D-glucose: step 4/4. The polypeptide is Fructose-bisphosphate aldolase 2 (aldo-2) (Caenorhabditis elegans).